A 155-amino-acid chain; its full sequence is Ribosomal RNA large subunit methyltransferase H (155 aa).

S-adenosyl-L-methionine-binding positions include Leu-73, Gly-104, and 123–128 (LSPLTL).

The protein belongs to the RNA methyltransferase RlmH family. Homodimer.

The protein localises to the cytoplasm. It catalyses the reaction pseudouridine(1915) in 23S rRNA + S-adenosyl-L-methionine = N(3)-methylpseudouridine(1915) in 23S rRNA + S-adenosyl-L-homocysteine + H(+). Functionally, specifically methylates the pseudouridine at position 1915 (m3Psi1915) in 23S rRNA. The sequence is that of Ribosomal RNA large subunit methyltransferase H from Pseudomonas syringae pv. tomato (strain ATCC BAA-871 / DC3000).